A 282-amino-acid polypeptide reads, in one-letter code: Pantothenate synthetase (282 aa).

33 to 40 (MGALHAGH) lines the ATP pocket. Histidine 40 acts as the Proton donor in catalysis. Glutamine 64 is a binding site for (R)-pantoate. Glutamine 64 is a binding site for beta-alanine. ATP is bound at residue 150–153 (GEKD). Glutamine 156 lines the (R)-pantoate pocket. Residues valine 179 and 187-190 (LSSR) contribute to the ATP site.

The protein belongs to the pantothenate synthetase family. As to quaternary structure, homodimer.

The protein resides in the cytoplasm. It carries out the reaction (R)-pantoate + beta-alanine + ATP = (R)-pantothenate + AMP + diphosphate + H(+). The protein operates within cofactor biosynthesis; (R)-pantothenate biosynthesis; (R)-pantothenate from (R)-pantoate and beta-alanine: step 1/1. In terms of biological role, catalyzes the condensation of pantoate with beta-alanine in an ATP-dependent reaction via a pantoyl-adenylate intermediate. In Rhodospirillum rubrum (strain ATCC 11170 / ATH 1.1.1 / DSM 467 / LMG 4362 / NCIMB 8255 / S1), this protein is Pantothenate synthetase.